The chain runs to 250 residues: Putative beta-carotene-binding protein (250 aa).

Deposited in the epidermis and cuticle of male locusts during their sexual maturation.

Its function is as follows. Has beta-carotene-binding activity. May be involved in the transport of carotenes from internal tissues to epidermis and cuticle of the locust. The sequence is that of Putative beta-carotene-binding protein from Schistocerca gregaria (Desert locust).